The sequence spans 201 residues: Small ribosomal subunit protein uS4 (201 aa).

Residues 1–42 form a disordered region; that stretch reads MARYTGPATRKSRRLGVDLVGGDQSFEKRPYPPGQHGRARIK. The S4 RNA-binding domain occupies 91–157; that stretch reads SRLDNVVYRA…LPFQIARETA (67 aa).

The protein belongs to the universal ribosomal protein uS4 family. In terms of assembly, part of the 30S ribosomal subunit. Contacts protein S5. The interaction surface between S4 and S5 is involved in control of translational fidelity.

One of the primary rRNA binding proteins, it binds directly to 16S rRNA where it nucleates assembly of the body of the 30S subunit. Its function is as follows. With S5 and S12 plays an important role in translational accuracy. In Mycolicibacterium smegmatis (strain ATCC 700084 / mc(2)155) (Mycobacterium smegmatis), this protein is Small ribosomal subunit protein uS4.